A 140-amino-acid polypeptide reads, in one-letter code: Flagellar assembly factor FliW (140 aa).

This sequence belongs to the FliW family. In terms of assembly, interacts with translational regulator CsrA and flagellin(s).

The protein localises to the cytoplasm. In terms of biological role, acts as an anti-CsrA protein, binds CsrA and prevents it from repressing translation of its target genes, one of which is flagellin. Binds to flagellin and participates in the assembly of the flagellum. This Syntrophotalea carbinolica (strain DSM 2380 / NBRC 103641 / GraBd1) (Pelobacter carbinolicus) protein is Flagellar assembly factor FliW.